A 248-amino-acid chain; its full sequence is Homeobox-leucine zipper protein HOX15 (248 aa).

The tract at residues 1–44 (MAQDDEDVGLALGLSLGSGGHRRQRESRDEAPSSAAASLLTLRL) is disordered. Residues 32 to 44 (PSSAAASLLTLRL) are compositionally biased toward low complexity. Residues 91-150 (NSRKKLRLSKEQSALLEDRFKEHSTLNPKQKVALAKQLNLRPRQVEVWFQNRRARTKLKQ) constitute a DNA-binding region (homeobox). The segment at 149–193 (KQTEVDCELLKRCCETLTEENRRLHRELQQLRALTHSTAAGFFMA) is leucine-zipper. Residues 223-248 (PTAAADRTNKPTAPHLFSPFAKSAAC) are disordered.

The protein belongs to the HD-ZIP homeobox family. Class II subfamily. As to expression, expressed in seedlings, stems, leaf blades and panicles.

It is found in the nucleus. Probable transcription factor. The protein is Homeobox-leucine zipper protein HOX15 (HOX15) of Oryza sativa subsp. indica (Rice).